Here is a 254-residue protein sequence, read N- to C-terminus: NH(3)-dependent NAD(+) synthetase (254 aa).

Residue 29 to 36 (GLSGGIDS) coordinates ATP. D35 is a Mg(2+) binding site. R115 provides a ligand contact to deamido-NAD(+). An ATP-binding site is contributed by T135. Position 140 (E140) interacts with Mg(2+). K148 and D155 together coordinate deamido-NAD(+). Residues K164 and S186 each contribute to the ATP site. 245-246 (HK) serves as a coordination point for deamido-NAD(+).

This sequence belongs to the NAD synthetase family. Homodimer.

It carries out the reaction deamido-NAD(+) + NH4(+) + ATP = AMP + diphosphate + NAD(+) + H(+). The protein operates within cofactor biosynthesis; NAD(+) biosynthesis; NAD(+) from deamido-NAD(+) (ammonia route): step 1/1. Its function is as follows. Catalyzes the ATP-dependent amidation of deamido-NAD to form NAD. Uses ammonia as a nitrogen source. The polypeptide is NH(3)-dependent NAD(+) synthetase (Methanococcus aeolicus (strain ATCC BAA-1280 / DSM 17508 / OCM 812 / Nankai-3)).